The sequence spans 225 residues: ATP-dependent dethiobiotin synthetase BioD (225 aa).

13–18 (NVGKTL) is a binding site for ATP. Threonine 17 lines the Mg(2+) pocket. Lysine 38 is an active-site residue. Threonine 42 provides a ligand contact to substrate. ATP is bound by residues aspartate 55, 116–119 (EGAG), 176–177 (NH), and 205–207 (PWL). Residues aspartate 55 and glutamate 116 each coordinate Mg(2+).

The protein belongs to the dethiobiotin synthetase family. As to quaternary structure, homodimer. The cofactor is Mg(2+).

It is found in the cytoplasm. It catalyses the reaction (7R,8S)-7,8-diammoniononanoate + CO2 + ATP = (4R,5S)-dethiobiotin + ADP + phosphate + 3 H(+). It participates in cofactor biosynthesis; biotin biosynthesis; biotin from 7,8-diaminononanoate: step 1/2. Its function is as follows. Catalyzes a mechanistically unusual reaction, the ATP-dependent insertion of CO2 between the N7 and N8 nitrogen atoms of 7,8-diaminopelargonic acid (DAPA, also called 7,8-diammoniononanoate) to form a ureido ring. This Baumannia cicadellinicola subsp. Homalodisca coagulata protein is ATP-dependent dethiobiotin synthetase BioD.